Reading from the N-terminus, the 258-residue chain is Thiazole synthase (258 aa).

The active-site Schiff-base intermediate with DXP is the Lys96. 1-deoxy-D-xylulose 5-phosphate contacts are provided by residues Gly157, 183-184 (AG), and 205-206 (NT).

The protein belongs to the ThiG family. In terms of assembly, homotetramer. Forms heterodimers with either ThiH or ThiS.

Its subcellular location is the cytoplasm. The enzyme catalyses [ThiS sulfur-carrier protein]-C-terminal-Gly-aminoethanethioate + 2-iminoacetate + 1-deoxy-D-xylulose 5-phosphate = [ThiS sulfur-carrier protein]-C-terminal Gly-Gly + 2-[(2R,5Z)-2-carboxy-4-methylthiazol-5(2H)-ylidene]ethyl phosphate + 2 H2O + H(+). Its pathway is cofactor biosynthesis; thiamine diphosphate biosynthesis. Catalyzes the rearrangement of 1-deoxy-D-xylulose 5-phosphate (DXP) to produce the thiazole phosphate moiety of thiamine. Sulfur is provided by the thiocarboxylate moiety of the carrier protein ThiS. In vitro, sulfur can be provided by H(2)S. In Alkaliphilus metalliredigens (strain QYMF), this protein is Thiazole synthase.